The following is a 443-amino-acid chain: Ribosomal protein uS12 methylthiotransferase RimO (443 aa).

An MTTase N-terminal domain is found at 8 to 118; that stretch reads PKVGFVSLGC…VVNAVHEVVP (111 aa). Positions 17, 53, 82, 151, 155, and 158 each coordinate [4Fe-4S] cluster. The 240-residue stretch at 137-376 folds into the Radical SAM core domain; the sequence is LTPRHYAYLK…AHQQAISSAR (240 aa). The region spanning 378-443 is the TRAM domain; the sequence is QLRIGKEIEV…DEYDMWAEPV (66 aa).

This sequence belongs to the methylthiotransferase family. RimO subfamily. The cofactor is [4Fe-4S] cluster.

It is found in the cytoplasm. It catalyses the reaction L-aspartate(89)-[ribosomal protein uS12]-hydrogen + (sulfur carrier)-SH + AH2 + 2 S-adenosyl-L-methionine = 3-methylsulfanyl-L-aspartate(89)-[ribosomal protein uS12]-hydrogen + (sulfur carrier)-H + 5'-deoxyadenosine + L-methionine + A + S-adenosyl-L-homocysteine + 2 H(+). Catalyzes the methylthiolation of an aspartic acid residue of ribosomal protein uS12. The polypeptide is Ribosomal protein uS12 methylthiotransferase RimO (Pseudomonas putida (strain W619)).